The sequence spans 305 residues: Probable 5-dehydro-4-deoxyglucarate dehydratase (305 aa).

It belongs to the DapA family.

The catalysed reaction is 5-dehydro-4-deoxy-D-glucarate + H(+) = 2,5-dioxopentanoate + CO2 + H2O. It participates in carbohydrate acid metabolism; D-glucarate degradation; 2,5-dioxopentanoate from D-glucarate: step 2/2. In Xanthomonas campestris pv. campestris (strain 8004), this protein is Probable 5-dehydro-4-deoxyglucarate dehydratase.